The primary structure comprises 544 residues: CTP synthase (544 aa).

Residues M1–L266 form an amidoligase domain region. Position 13 (S13) interacts with CTP. S13 contacts UTP. Residues S14–I19 and D71 each bind ATP. D71 and E140 together coordinate Mg(2+). Residues D147 to E149, K187 to Q192, and K223 contribute to the CTP site. UTP contacts are provided by residues K187 to Q192 and K223. Residues T291–A543 enclose the Glutamine amidotransferase type-1 domain. Position 354 (G354) interacts with L-glutamine. Catalysis depends on C381, which acts as the Nucleophile; for glutamine hydrolysis. L-glutamine-binding positions include L382–Q385, E404, and R471. Residues H516 and E518 contribute to the active site.

This sequence belongs to the CTP synthase family. In terms of assembly, homotetramer.

It carries out the reaction UTP + L-glutamine + ATP + H2O = CTP + L-glutamate + ADP + phosphate + 2 H(+). It catalyses the reaction L-glutamine + H2O = L-glutamate + NH4(+). The enzyme catalyses UTP + NH4(+) + ATP = CTP + ADP + phosphate + 2 H(+). It functions in the pathway pyrimidine metabolism; CTP biosynthesis via de novo pathway; CTP from UDP: step 2/2. Its activity is regulated as follows. Allosterically activated by GTP, when glutamine is the substrate; GTP has no effect on the reaction when ammonia is the substrate. The allosteric effector GTP functions by stabilizing the protein conformation that binds the tetrahedral intermediate(s) formed during glutamine hydrolysis. Inhibited by the product CTP, via allosteric rather than competitive inhibition. Its function is as follows. Catalyzes the ATP-dependent amination of UTP to CTP with either L-glutamine or ammonia as the source of nitrogen. Regulates intracellular CTP levels through interactions with the four ribonucleotide triphosphates. The polypeptide is CTP synthase (Psychrobacter cryohalolentis (strain ATCC BAA-1226 / DSM 17306 / VKM B-2378 / K5)).